The primary structure comprises 286 residues: Shikimate dehydrogenase (NADP(+)) (286 aa).

Residues 22-24 (SRS) and Thr-71 contribute to the shikimate site. Lys-75 (proton acceptor) is an active-site residue. Glu-87 lines the NADP(+) pocket. Asn-96 and Asp-111 together coordinate shikimate. Residues 136–140 (GAGGA), 160–165 (NRTPER), and Ile-225 contribute to the NADP(+) site. Tyr-227 lines the shikimate pocket. Position 248 (Gly-248) interacts with NADP(+).

Belongs to the shikimate dehydrogenase family. Homodimer.

It carries out the reaction shikimate + NADP(+) = 3-dehydroshikimate + NADPH + H(+). It functions in the pathway metabolic intermediate biosynthesis; chorismate biosynthesis; chorismate from D-erythrose 4-phosphate and phosphoenolpyruvate: step 4/7. In terms of biological role, involved in the biosynthesis of the chorismate, which leads to the biosynthesis of aromatic amino acids. Catalyzes the reversible NADPH linked reduction of 3-dehydroshikimate (DHSA) to yield shikimate (SA). This Sinorhizobium medicae (strain WSM419) (Ensifer medicae) protein is Shikimate dehydrogenase (NADP(+)).